The primary structure comprises 468 residues: Glucose-dependent insulinotropic receptor (468 aa).

Residues 1 to 6 (MESSFS) lie on the Extracellular side of the membrane. The chain crosses the membrane as a helical span at residues 7 to 27 (FGVILAVLTILIIAVNALVVV). Residues 28–37 (AMLLSIYKND) are Cytoplasmic-facing. A helical transmembrane segment spans residues 38–58 (GVGLCFTLNLAVADTLIGVAI). Residues 59-81 (SGLVTDQLSSSAQHTQKTLCSLR) are Extracellular-facing. The helical transmembrane segment at 82-102 (MAFVTSSAAASVLTVMLIAFD) threads the bilayer. At 103–125 (RYLAIKQPLRYFQIMNGLVAGGC) the chain is on the cytoplasmic side. A helical transmembrane segment spans residues 126-146 (IAGLWLISYLIGFLPLGVSIF). At 147-164 (QQTTYHGPCTFFAVFHPR) the chain is on the extracellular side. Residues 165–185 (FVLTLSCAGFFPAVLLFVFFY) form a helical membrane-spanning segment. Residues 186-226 (CDMLKIASVHSQHIRKMEHAGAMVGACRPPRPVNDFKAVRT) are Cytoplasmic-facing. Residues 227-247 (VSVLIGSFTLSWSPFLITSIV) form a helical membrane-spanning segment. The Extracellular portion of the chain corresponds to 248–262 (QVACHKCCLYQVLEK). Residues 263-283 (YLWLLGVGNSLLNPLIYAYWQ) form a helical membrane-spanning segment. The Cytoplasmic segment spans residues 284–468 (REVRQQLCHM…MSDPLRTCRG (185 aa)).

It belongs to the G-protein coupled receptor 1 family. As to expression, expression restricted to the beta-cells of pancreatic islets.

It is found in the cell membrane. Functionally, receptor for the endogenous fatty-acid ethanolamide oleoylethanolamide (OEA) and lysophosphatidylcholine (LPC). Functions as a glucose-dependent insulinotropic receptor. The activity of this receptor is mediated by G proteins which activate adenylate cyclase. Seems to act through a G(s) mediated pathway. This is Glucose-dependent insulinotropic receptor (Gpr119) from Rattus norvegicus (Rat).